The following is a 114-amino-acid chain: Superoxide dismutase [Cu-Zn] (114 aa).

Cu cation is bound by residues His-37, His-39, and His-54. Residues 49–73 (MSSGPHYNPRNKEHGAPTDENRHLG) are disordered. Zn(2+) contacts are provided by His-54, His-62, His-71, and Asp-74. The span at 58–73 (RNKEHGAPTDENRHLG) shows a compositional bias: basic and acidic residues. Residue His-111 coordinates Cu cation.

It belongs to the Cu-Zn superoxide dismutase family. As to quaternary structure, homodimer. Cu cation is required as a cofactor. Zn(2+) serves as cofactor.

The protein localises to the cytoplasm. The catalysed reaction is 2 superoxide + 2 H(+) = H2O2 + O2. Destroys radicals which are normally produced within the cells and which are toxic to biological systems. The polypeptide is Superoxide dismutase [Cu-Zn] (Drosophila madeirensis (Fruit fly)).